The sequence spans 964 residues: Glycine dehydrogenase (decarboxylating) (964 aa).

Position 711 is an N6-(pyridoxal phosphate)lysine (K711).

The protein belongs to the GcvP family. As to quaternary structure, the glycine cleavage system is composed of four proteins: P, T, L and H. Pyridoxal 5'-phosphate is required as a cofactor.

It catalyses the reaction N(6)-[(R)-lipoyl]-L-lysyl-[glycine-cleavage complex H protein] + glycine + H(+) = N(6)-[(R)-S(8)-aminomethyldihydrolipoyl]-L-lysyl-[glycine-cleavage complex H protein] + CO2. In terms of biological role, the glycine cleavage system catalyzes the degradation of glycine. The P protein binds the alpha-amino group of glycine through its pyridoxal phosphate cofactor; CO(2) is released and the remaining methylamine moiety is then transferred to the lipoamide cofactor of the H protein. The sequence is that of Glycine dehydrogenase (decarboxylating) from Prochlorococcus marinus (strain SARG / CCMP1375 / SS120).